A 52-amino-acid chain; its full sequence is DNA-directed RNA polymerase subunit Rpo12 (52 aa).

3 residues coordinate Zn(2+): cysteine 13, cysteine 30, and cysteine 33.

This sequence belongs to the archaeal Rpo12/eukaryotic RPC10 RNA polymerase subunit family. As to quaternary structure, part of the RNA polymerase complex. The cofactor is Zn(2+).

It localises to the cytoplasm. The catalysed reaction is RNA(n) + a ribonucleoside 5'-triphosphate = RNA(n+1) + diphosphate. Its function is as follows. DNA-dependent RNA polymerase (RNAP) catalyzes the transcription of DNA into RNA using the four ribonucleoside triphosphates as substrates. This Pyrobaculum neutrophilum (strain DSM 2338 / JCM 9278 / NBRC 100436 / V24Sta) (Thermoproteus neutrophilus) protein is DNA-directed RNA polymerase subunit Rpo12.